We begin with the raw amino-acid sequence, 249 residues long: Triosephosphate isomerase (249 aa).

Substrate is bound at residue 9-11; that stretch reads NWK. The active-site Electrophile is the histidine 95. The active-site Proton acceptor is the glutamate 166. Substrate-binding positions include glycine 172, serine 211, and 232-233; that span reads GG.

This sequence belongs to the triosephosphate isomerase family. In terms of assembly, homodimer.

The protein resides in the cytoplasm. It carries out the reaction D-glyceraldehyde 3-phosphate = dihydroxyacetone phosphate. It participates in carbohydrate biosynthesis; gluconeogenesis. The protein operates within carbohydrate degradation; glycolysis; D-glyceraldehyde 3-phosphate from glycerone phosphate: step 1/1. Functionally, involved in the gluconeogenesis. Catalyzes stereospecifically the conversion of dihydroxyacetone phosphate (DHAP) to D-glyceraldehyde-3-phosphate (G3P). The chain is Triosephosphate isomerase from Legionella pneumophila subsp. pneumophila (strain Philadelphia 1 / ATCC 33152 / DSM 7513).